We begin with the raw amino-acid sequence, 159 residues long: Small ribosomal subunit protein uS7m (159 aa).

It belongs to the universal ribosomal protein uS7 family. In terms of assembly, part of the small ribosomal subunit.

The protein resides in the mitochondrion. Its function is as follows. One of the primary rRNA binding proteins, it binds directly to the small rRNA where it nucleates assembly of the head domain of the small subunit. This chain is Small ribosomal subunit protein uS7m (RPS7), found in Reclinomonas americana.